The primary structure comprises 317 residues: Lipoyl synthase (317 aa).

[4Fe-4S] cluster-binding residues include C59, C64, C70, C85, C89, C92, and S298. The 217-residue stretch at 71-287 (WSQRHASFMI…AKIGKAKGFL (217 aa)) folds into the Radical SAM core domain.

This sequence belongs to the radical SAM superfamily. Lipoyl synthase family. Requires [4Fe-4S] cluster as cofactor.

It localises to the cytoplasm. It catalyses the reaction [[Fe-S] cluster scaffold protein carrying a second [4Fe-4S](2+) cluster] + N(6)-octanoyl-L-lysyl-[protein] + 2 oxidized [2Fe-2S]-[ferredoxin] + 2 S-adenosyl-L-methionine + 4 H(+) = [[Fe-S] cluster scaffold protein] + N(6)-[(R)-dihydrolipoyl]-L-lysyl-[protein] + 4 Fe(3+) + 2 hydrogen sulfide + 2 5'-deoxyadenosine + 2 L-methionine + 2 reduced [2Fe-2S]-[ferredoxin]. It participates in protein modification; protein lipoylation via endogenous pathway; protein N(6)-(lipoyl)lysine from octanoyl-[acyl-carrier-protein]: step 2/2. Functionally, catalyzes the radical-mediated insertion of two sulfur atoms into the C-6 and C-8 positions of the octanoyl moiety bound to the lipoyl domains of lipoate-dependent enzymes, thereby converting the octanoylated domains into lipoylated derivatives. The protein is Lipoyl synthase of Bartonella bacilliformis (strain ATCC 35685 / KC583 / Herrer 020/F12,63).